The following is a 405-amino-acid chain: MQRNGVVECSVCRSRLVVPSPRSVSRAYDKHRSKISSKFRALNVLLVVGDCILVGLQPILVFMSKVDGKFQFSPISVNFLTEVTKVVFAIVMLIIQSRKQKVGEKPLLARSTFIQAARNNALLAVPALLYAINNYLKFIMQLYFNPSTVKMLSNLKVLVIAVLLKFIMKRRFSVIQWEALALLLIGISINQLRTVPAGNTAFGLPVTAIAYIYTLIFVTVPSLASVYNEYALKSQYDTSIYLQNLFLYGYGAIFNFLGILGTALFQGPESFNILRGHSRATMFLICNNAAQGILSSFFFKYADTILKKYSSTVATIFTGLASAAFLGHTLTINFLLGISVVFISMHQFFSPLAKAKDDKPAELLELEDTQNHRSSESSFVNMTAGAAEDASHRIGTDERQPLLPT.

At 1 to 43 the chain is on the cytoplasmic side; it reads MQRNGVVECSVCRSRLVVPSPRSVSRAYDKHRSKISSKFRALN. The chain crosses the membrane as a helical span at residues 44 to 64; it reads VLLVVGDCILVGLQPILVFMS. Residues 65–74 are Lumenal-facing; it reads KVDGKFQFSP. Residues 75-95 traverse the membrane as a helical segment; it reads ISVNFLTEVTKVVFAIVMLII. Over 96-121 the chain is Cytoplasmic; it reads QSRKQKVGEKPLLARSTFIQAARNNA. The helical transmembrane segment at 122–142 threads the bilayer; sequence LLAVPALLYAINNYLKFIMQL. At 143–147 the chain is on the lumenal side; it reads YFNPS. Residues 148-168 form a helical membrane-spanning segment; it reads TVKMLSNLKVLVIAVLLKFIM. At 169–171 the chain is on the cytoplasmic side; that stretch reads KRR. A helical membrane pass occupies residues 172–192; the sequence is FSVIQWEALALLLIGISINQL. Over 193-200 the chain is Lumenal; the sequence is RTVPAGNT. A helical membrane pass occupies residues 201 to 221; that stretch reads AFGLPVTAIAYIYTLIFVTVP. At 222-244 the chain is on the cytoplasmic side; it reads SLASVYNEYALKSQYDTSIYLQN. A helical transmembrane segment spans residues 245-265; sequence LFLYGYGAIFNFLGILGTALF. Residues 266–281 are Lumenal-facing; it reads QGPESFNILRGHSRAT. Residues 282-302 traverse the membrane as a helical segment; it reads MFLICNNAAQGILSSFFFKYA. Topologically, residues 303–322 are cytoplasmic; it reads DTILKKYSSTVATIFTGLAS. The chain crosses the membrane as a helical span at residues 323 to 343; sequence AAFLGHTLTINFLLGISVVFI. Over 344–405 the chain is Lumenal; it reads SMHQFFSPLA…TDERQPLLPT (62 aa). Residues 368–405 form a disordered region; the sequence is DTQNHRSSESSFVNMTAGAAEDASHRIGTDERQPLLPT. The segment covering 389–405 has biased composition (basic and acidic residues); sequence DASHRIGTDERQPLLPT.

Belongs to the nucleotide-sugar transporter family. CMP-Sialate:CMP antiporter (TC 2.A.7.12) subfamily.

Its subcellular location is the golgi apparatus membrane. Sugar transporter involved in the transport of CMP-sialic acid from the cytoplasm into the Golgi. May transport important nucleotide sugars such as CMP-Kdo (2-keto-3-deoxy-D-manno-octulosonic acid) in physiological conditions. This Oryza sativa subsp. japonica (Rice) protein is CMP-sialic acid transporter 5.